Here is a 916-residue protein sequence, read N- to C-terminus: Extracellular signal-regulated kinase 7 (916 aa).

Residues 25 to 319 (FDVRKRMGKG…AKEAIRHPYV (295 aa)) form the Protein kinase domain. Residues 31 to 39 (MGKGAYGIV) and Lys54 each bind ATP. Catalysis depends on Asp149, which acts as the Proton acceptor. Composition is skewed to polar residues over residues 364–376 (CSNRTVSNSTPSS) and 390–403 (QARTTSAKQPTTSP). 6 disordered regions span residues 364-419 (CSNR…TQSR), 452-477 (PPAAAPPAPAATAPAVPRKSGDKSVP), 588-608 (PSETEHRQQREERAYQRQMKR), 711-742 (KKLQRSKESDEKDEDDRRALPEGIGGPGSQNY), 792-813 (ELNPAPDSGGRDSGSEHSPGRD), and 883-916 (CRHRHHKPNHHAPYDHMRPTEDDIQEADSLPESN). Basic and acidic residues-rich tracts occupy residues 590–608 (ETEHRQQREERAYQRQMKR), 715–730 (RSKESDEKDEDDRRAL), and 800–811 (GGRDSGSEHSPG). Positions 883-892 (CRHRHHKPNH) are enriched in basic residues. A compositionally biased stretch (basic and acidic residues) spans 894–903 (APYDHMRPTE).

Belongs to the protein kinase superfamily. Ser/Thr protein kinase family.

It carries out the reaction L-seryl-[protein] + ATP = O-phospho-L-seryl-[protein] + ADP + H(+). The catalysed reaction is L-threonyl-[protein] + ATP = O-phospho-L-threonyl-[protein] + ADP + H(+). Functionally, atypical MAPK protein that regulates protein secretion in a kinase activity-dependent manner. In response to starvation regulates protein secretion by mediating transitional endoplasmic reticulum site disassembly. Mediates inhibition of insulin-like peptide secretion upon disturbed ribosome biogenesis and acts as a downstream effector of TP53. This is Extracellular signal-regulated kinase 7 from Drosophila melanogaster (Fruit fly).